The chain runs to 417 residues: Voltage-gated potassium channel Kch (417 aa).

Over 1–21 (MSHWATFKQTATNLWVTLRHD) the chain is Cytoplasmic. A helical membrane pass occupies residues 22-41 (ILALAVFLNGLLIFKTIYGM). At 42 to 63 (SVNLLDIFHIKAFSELDLSLLA) the chain is on the periplasmic side. The helical transmembrane segment at 64–83 (NAPLFMLGVFLVLNSIGLLF) threads the bilayer. Residues 84–86 (RAK) lie on the Cytoplasmic side of the membrane. A helical transmembrane segment spans residues 87–104 (LAWAISIILLLIALIYTL). Over 105–110 (HFYPWL) the chain is Periplasmic. The chain crosses the membrane as a helical span at residues 111–127 (KFSIGFCIFTLVFLLIL). Over 128–140 (RKDFSHSSAAAGT) the chain is Cytoplasmic. A helical transmembrane segment spans residues 141–160 (IFAFISFTTLLFYSTYGALY). At 161–199 (LSEGFNPRIESLMTAFYFSIETMSTVGYGDIVPVSESAR) the chain is on the periplasmic side. Positions 185 to 190 (TVGYGD) match the Selectivity filter motif. Residues 200 to 220 (LFTISVIISGITVFATSMTSI) traverse the membrane as a helical segment. Residues 221 to 417 (FGPLIRGGFN…KADSKESAQK (197 aa)) are Cytoplasmic-facing. The RCK N-terminal domain maps to 243–363 (KDHFIVCGHS…IKMVHPDIIL (121 aa)).

This sequence belongs to the potassium channel family. Dimer.

It is found in the cell inner membrane. Functionally, k(+)-specific ion channel. May play a role in the defense against osmotic shock. This Escherichia coli (strain K12) protein is Voltage-gated potassium channel Kch (kch).